A 311-amino-acid polypeptide reads, in one-letter code: Pantothenate kinase (311 aa).

Gly-93–Ser-100 lines the ATP pocket.

The protein belongs to the prokaryotic pantothenate kinase family.

It is found in the cytoplasm. It carries out the reaction (R)-pantothenate + ATP = (R)-4'-phosphopantothenate + ADP + H(+). Its pathway is cofactor biosynthesis; coenzyme A biosynthesis; CoA from (R)-pantothenate: step 1/5. This is Pantothenate kinase (coaA) from Haemophilus influenzae (strain ATCC 51907 / DSM 11121 / KW20 / Rd).